The chain runs to 90 residues: Small ribosomal subunit protein uS15c (90 aa).

Belongs to the universal ribosomal protein uS15 family. As to quaternary structure, part of the 30S ribosomal subunit.

Its subcellular location is the plastid. The protein resides in the chloroplast. The protein is Small ribosomal subunit protein uS15c (rps15) of Nandina domestica (Heavenly bamboo).